The following is a 184-amino-acid chain: MFSSQHRLLYQPSGPDLSKNLDPERGRRLGIDVGSVRIGVAFSDPDGILATPVETVRRYRSAKHLRRLAELVVELQVVEVVVGLPWTLTDRTGSSAKDAIDTAEALARRVAPVPVRLVDERLTTVSAQRLLRAAGVRAKDQRAVIDQAAAVVILQNWLDQCRAATPARADEPTTGSVAGEVIDG.

Positions 1–23 are disordered; sequence MFSSQHRLLYQPSGPDLSKNLDP.

It belongs to the YqgF nuclease family.

It is found in the cytoplasm. Its function is as follows. Could be a nuclease involved in processing of the 5'-end of pre-16S rRNA. The sequence is that of Putative pre-16S rRNA nuclease from Mycobacterium leprae (strain Br4923).